A 202-amino-acid polypeptide reads, in one-letter code: N-(5'-phosphoribosyl)anthranilate isomerase (202 aa).

This sequence belongs to the TrpF family.

It catalyses the reaction N-(5-phospho-beta-D-ribosyl)anthranilate = 1-(2-carboxyphenylamino)-1-deoxy-D-ribulose 5-phosphate. It participates in amino-acid biosynthesis; L-tryptophan biosynthesis; L-tryptophan from chorismate: step 3/5. This is N-(5'-phosphoribosyl)anthranilate isomerase from Listeria monocytogenes serotype 4b (strain CLIP80459).